The sequence spans 490 residues: Cytochrome P450 2C25 (490 aa).

A heme-binding site is contributed by Cys435.

Belongs to the cytochrome P450 family. Requires heme as cofactor.

It localises to the endoplasmic reticulum membrane. Its subcellular location is the microsome membrane. It carries out the reaction an organic molecule + reduced [NADPH--hemoprotein reductase] + O2 = an alcohol + oxidized [NADPH--hemoprotein reductase] + H2O + H(+). Functionally, catalyzes the hydroxylation of tolbutamide and the N-demethylation of aminopyrine and benzphetamine. Also has testosterone hydroxylase (16 beta) activity. The chain is Cytochrome P450 2C25 (CYP2C25) from Mesocricetus auratus (Golden hamster).